The primary structure comprises 159 residues: Ribosomal RNA large subunit methyltransferase H (159 aa).

S-adenosyl-L-methionine is bound by residues Leu-76, Gly-108, and 127 to 132 (FGRLTL).

It belongs to the RNA methyltransferase RlmH family. Homodimer.

The protein localises to the cytoplasm. It catalyses the reaction pseudouridine(1915) in 23S rRNA + S-adenosyl-L-methionine = N(3)-methylpseudouridine(1915) in 23S rRNA + S-adenosyl-L-homocysteine + H(+). In terms of biological role, specifically methylates the pseudouridine at position 1915 (m3Psi1915) in 23S rRNA. This Listeria monocytogenes serotype 4a (strain HCC23) protein is Ribosomal RNA large subunit methyltransferase H.